The sequence spans 338 residues: Ketol-acid reductoisomerase (NADP(+)) (338 aa).

A KARI N-terminal Rossmann domain is found at 1 to 181; it reads MKVFYDKDAD…GGGRAGIIET (181 aa). NADP(+) is bound by residues 24–27, Arg-47, and Ser-52; that span reads YGSQ. Residue His-107 is part of the active site. Gly-133 contributes to the NADP(+) binding site. The KARI C-terminal knotted domain maps to 182–327; sequence NFREETETDL…SKLRAMMPWI (146 aa). Residues Asp-190, Glu-194, Glu-226, and Glu-230 each contribute to the Mg(2+) site. Ser-251 is a binding site for substrate.

It belongs to the ketol-acid reductoisomerase family. It depends on Mg(2+) as a cofactor.

The enzyme catalyses (2R)-2,3-dihydroxy-3-methylbutanoate + NADP(+) = (2S)-2-acetolactate + NADPH + H(+). It carries out the reaction (2R,3R)-2,3-dihydroxy-3-methylpentanoate + NADP(+) = (S)-2-ethyl-2-hydroxy-3-oxobutanoate + NADPH + H(+). The protein operates within amino-acid biosynthesis; L-isoleucine biosynthesis; L-isoleucine from 2-oxobutanoate: step 2/4. Its pathway is amino-acid biosynthesis; L-valine biosynthesis; L-valine from pyruvate: step 2/4. In terms of biological role, involved in the biosynthesis of branched-chain amino acids (BCAA). Catalyzes an alkyl-migration followed by a ketol-acid reduction of (S)-2-acetolactate (S2AL) to yield (R)-2,3-dihydroxy-isovalerate. In the isomerase reaction, S2AL is rearranged via a Mg-dependent methyl migration to produce 3-hydroxy-3-methyl-2-ketobutyrate (HMKB). In the reductase reaction, this 2-ketoacid undergoes a metal-dependent reduction by NADPH to yield (R)-2,3-dihydroxy-isovalerate. The sequence is that of Ketol-acid reductoisomerase (NADP(+)) from Burkholderia thailandensis (strain ATCC 700388 / DSM 13276 / CCUG 48851 / CIP 106301 / E264).